The following is a 431-amino-acid chain: Glutamate--tRNA ligase 1 (431 aa).

Positions 6–16 match the 'HIGH' region motif; sequence PSPTGDMHIGN. Positions 235–239 match the 'KMSKS' region motif; the sequence is KMSKR. Lys-238 is a binding site for ATP.

This sequence belongs to the class-I aminoacyl-tRNA synthetase family. Glutamate--tRNA ligase type 1 subfamily. Monomer.

The protein resides in the cytoplasm. It catalyses the reaction tRNA(Glu) + L-glutamate + ATP = L-glutamyl-tRNA(Glu) + AMP + diphosphate. Its function is as follows. Catalyzes the attachment of glutamate to tRNA(Glu) in a two-step reaction: glutamate is first activated by ATP to form Glu-AMP and then transferred to the acceptor end of tRNA(Glu). The polypeptide is Glutamate--tRNA ligase 1 (Campylobacter jejuni (strain RM1221)).